The primary structure comprises 642 residues: Threonine--tRNA ligase (642 aa).

Residues 1-61 form the TGS domain; that stretch reads MPVITLPDGS…ESDAQLAIIT (61 aa). The interval 243 to 534 is catalytic; that stretch reads DHRKIGKQLD…LTEEYAGFYP (292 aa). Cys-334, His-385, and His-511 together coordinate Zn(2+).

It belongs to the class-II aminoacyl-tRNA synthetase family. As to quaternary structure, homodimer. Zn(2+) serves as cofactor.

Its subcellular location is the cytoplasm. The enzyme catalyses tRNA(Thr) + L-threonine + ATP = L-threonyl-tRNA(Thr) + AMP + diphosphate + H(+). In terms of biological role, catalyzes the attachment of threonine to tRNA(Thr) in a two-step reaction: L-threonine is first activated by ATP to form Thr-AMP and then transferred to the acceptor end of tRNA(Thr). Also edits incorrectly charged L-seryl-tRNA(Thr). The protein is Threonine--tRNA ligase of Serratia proteamaculans (strain 568).